We begin with the raw amino-acid sequence, 696 residues long: Solute carrier family 53 member 1 (696 aa).

Over 1–228 (MKFAEHLSAH…RVPPLGAAQP (228 aa)) the chain is Cytoplasmic. The 223-residue stretch at 2 to 224 (KFAEHLSAHI…MKRLRVPPLG (223 aa)) folds into the SPX domain. An important for inositol polyphosphate binding region spans residues 158–165 (KILKKHDK). The chain crosses the membrane as a helical span at residues 229 to 259 (APAWTTFRVGLFCGIFIVLNITLVLAAVFKL). Topologically, residues 260-264 (ETDRS) are extracellular. Residues 265-296 (IWPLIRIYRGGFLLIEFLFLLGINTYGWRQAG) form a helical membrane-spanning segment. The Cytoplasmic portion of the chain corresponds to 297-309 (VNHVLIFELNPRS). A helical membrane pass occupies residues 310–337 (NLSHQHLFEIAGFLGILWCLSLLACFFA). Residues 338-343 (PISVIP) are Extracellular-facing. A helical transmembrane segment spans residues 344 to 365 (TYVYPLALYGFMVFFLINPTKT). The segment at residues 366 to 383 (FYYKSRFWLLKLLFRVFT) is an intramembrane region (helical). At 384–388 (APFHK) the chain is on the cytoplasmic side. Residues 389-422 (VGFADFWLADQLNSLSVILMDLEYMICFYSLELK) traverse the membrane as a discontinuously helical segment. Asp-398 and Asn-401 together coordinate phosphate. Residues 423–429 (WDESKGL) lie on the Extracellular side of the membrane. The chain crosses the membrane as a discontinuously helical span at residues 430–471 (LPNNSEESGICHKYTYGVRAIVQCIPAWLRFIQCLRRYRDTK). Residues 439–643 (ICHKYTYGVR…LNADDQTLLE (205 aa)) form the EXS domain. Residue Arg-472 is a topological domain, cytoplasmic. A helical transmembrane segment spans residues 473-503 (AFPHLVNAGKYSTTFFMVTFAALYSTHKERG). Positions 482 and 483 each coordinate phosphate. The Extracellular portion of the chain corresponds to 504–506 (HSD). A helical transmembrane segment spans residues 507–534 (TMVFFYLWIVFYIISSCYTLIWDLKMDW). Residues 535–553 (GLFDKNAGENTFLREEIVY) lie on the Cytoplasmic side of the membrane. A discontinuously helical membrane pass occupies residues 554–585 (PQKAYYYCAIIEDVILRFAWTIQISITSTTLL). Residue Arg-570 coordinates phosphate. The Extracellular portion of the chain corresponds to 586 to 587 (PH). The helical transmembrane segment at 588–626 (SGDIIATVFAPLEVFRRFVWNFFRLENEHLNNCGEFRAV) threads the bilayer. The phosphate site is built by Arg-603 and Arg-604. At 627-696 (RDISVAPLNA…IEDTDDEANT (70 aa)) the chain is on the cytoplasmic side. Residue Ser-668 is modified to Phosphoserine. The interval 673 to 696 (RLASQSKARDTKVLIEDTDDEANT) is disordered. Position 690 is a phosphothreonine (Thr-690).

Belongs to the SYG1 (TC 2.A.94) family. In terms of assembly, homodimer. As to expression, widely expressed. Detected in spleen, lymph node, thymus, leukocytes, bone marrow, heart, kidney, pancreas and skeletal muscle.

The protein resides in the cell membrane. It carries out the reaction phosphate(in) = phosphate(out). Allosterically activated by inositol hexakisphosphate (Ins6P). Its function is as follows. Inorganic ion transporter that mediates phosphate ion export across plasma membrane. Plays a major role in phosphate homeostasis, preventing intracellular phosphate accumulation and possible calcium phosphate precipitation, ultimately preserving calcium signaling. Binds inositol hexakisphosphate (Ins6P) and similar inositol polyphosphates, such as 5-diphospho-inositol pentakisphosphate (5-InsP7), which are important intracellular signaling molecules involved in regulation of phosphate flux. The chain is Solute carrier family 53 member 1 from Homo sapiens (Human).